Here is a 692-residue protein sequence, read N- to C-terminus: MAIERITDNKFELVSKYDPAGDQGQAISELVENIENGEKAQILRGATGTGKTYTMSQVIAQTGKPTLVMAHNKTLAGQLYSEFKEFFPNNAVEYFVSYYDYYQPEAYVPSSDTYIEKDSSVNDEIDKLRHSATSSLLERNDVIVVASVSCIYGLGSPKEYQDSVVSLRPGQEISRDQLLNDLVGIQFERNDIDFQRGCFRVRGDVVEVFPASRDEHAFRVEFFGDEIDRIREIEVLTGQVLGEVDHLAIFPATHFMTNDDRMEESIAKIEAELEAQLKVFRSEGKLLEAQRLEQRTNYDIEMLREMGYCNGVENYSRHMDGREEGEPPYTLLDFFPDDFMIMIDESHMTMGQVKGMYNGDRARKEMLCNYGFRLPSALDNRPLKREEFESHVHQIVYVSATPGDYEMEQTDTIVEQIIRPTGLLDPVVEVRPMMGQIDDLVGEIHKRAEKNERVFVTTLTKKMSEDLTAYFKEMGIKVKYMHSDIKTLERTEIIRDLRLGVFDVLVGINLLREGIDVPEVSLVAILDADKEGFLRNERGLIQTIGRAARNSEGHVILYSDMAKALDENDPADKEILDSGYYTEYEGQKYKITRSMKHAMDETARRRDIQMAYNEEHGITPQTIKKEIRDLIAITKKTDSGELEEVDASAMNKKERKALVKKLEKEMQQAAAALDFEGAAQLRDMVLELRAMD.

The 156-residue stretch at 32-187 folds into the Helicase ATP-binding domain; it reads ENIENGEKAQ…LLNDLVGIQF (156 aa). ATP is bound at residue 45–52; that stretch reads GATGTGKT. Positions 98–121 match the Beta-hairpin motif; sequence YYDYYQPEAYVPSSDTYIEKDSSV. The region spanning 436 to 631 is the Helicase C-terminal domain; that stretch reads QIDDLVGEIH…TIKKEIRDLI (196 aa). Positions 656 to 691 constitute a UVR domain; that stretch reads KALVKKLEKEMQQAAAALDFEGAAQLRDMVLELRAM.

Belongs to the UvrB family. In terms of assembly, forms a heterotetramer with UvrA during the search for lesions. Interacts with UvrC in an incision complex.

Its subcellular location is the cytoplasm. Its function is as follows. The UvrABC repair system catalyzes the recognition and processing of DNA lesions. A damage recognition complex composed of 2 UvrA and 2 UvrB subunits scans DNA for abnormalities. Upon binding of the UvrA(2)B(2) complex to a putative damaged site, the DNA wraps around one UvrB monomer. DNA wrap is dependent on ATP binding by UvrB and probably causes local melting of the DNA helix, facilitating insertion of UvrB beta-hairpin between the DNA strands. Then UvrB probes one DNA strand for the presence of a lesion. If a lesion is found the UvrA subunits dissociate and the UvrB-DNA preincision complex is formed. This complex is subsequently bound by UvrC and the second UvrB is released. If no lesion is found, the DNA wraps around the other UvrB subunit that will check the other stand for damage. In Lactococcus lactis subsp. cremoris (strain SK11), this protein is UvrABC system protein B.